The following is a 74-amino-acid chain: ATP synthase subunit c (74 aa).

2 consecutive transmembrane segments (helical) span residues Ile-13 to Ile-33 and Ile-51 to Ile-71.

The protein belongs to the ATPase C chain family. As to quaternary structure, F-type ATPases have 2 components, F(1) - the catalytic core - and F(0) - the membrane proton channel. F(1) has five subunits: alpha(3), beta(3), gamma(1), delta(1), epsilon(1). F(0) has three main subunits: a(1), b(2) and c(10-14). The alpha and beta chains form an alternating ring which encloses part of the gamma chain. F(1) is attached to F(0) by a central stalk formed by the gamma and epsilon chains, while a peripheral stalk is formed by the delta and b chains.

Its subcellular location is the cell inner membrane. F(1)F(0) ATP synthase produces ATP from ADP in the presence of a proton or sodium gradient. F-type ATPases consist of two structural domains, F(1) containing the extramembraneous catalytic core and F(0) containing the membrane proton channel, linked together by a central stalk and a peripheral stalk. During catalysis, ATP synthesis in the catalytic domain of F(1) is coupled via a rotary mechanism of the central stalk subunits to proton translocation. Functionally, key component of the F(0) channel; it plays a direct role in translocation across the membrane. A homomeric c-ring of between 10-14 subunits forms the central stalk rotor element with the F(1) delta and epsilon subunits. The protein is ATP synthase subunit c of Granulibacter bethesdensis (strain ATCC BAA-1260 / CGDNIH1).